We begin with the raw amino-acid sequence, 168 residues long: S-ribosylhomocysteine lyase (168 aa).

Fe cation contacts are provided by His-54, His-58, and Cys-128.

Belongs to the LuxS family. Homodimer. Fe cation serves as cofactor.

It catalyses the reaction S-(5-deoxy-D-ribos-5-yl)-L-homocysteine = (S)-4,5-dihydroxypentane-2,3-dione + L-homocysteine. In terms of biological role, involved in the synthesis of autoinducer 2 (AI-2) which is secreted by bacteria and is used to communicate both the cell density and the metabolic potential of the environment. The regulation of gene expression in response to changes in cell density is called quorum sensing. Catalyzes the transformation of S-ribosylhomocysteine (RHC) to homocysteine (HC) and 4,5-dihydroxy-2,3-pentadione (DPD). This is S-ribosylhomocysteine lyase from Mannheimia succiniciproducens (strain KCTC 0769BP / MBEL55E).